The chain runs to 475 residues: Ribosomal protein uS12 methylthiotransferase RimO (475 aa).

An MTTase N-terminal domain is found at 5-114 (RTVRLIRLGC…IAQRLEDVLA (110 aa)). The [4Fe-4S] cluster site is built by cysteine 14, cysteine 49, cysteine 78, cysteine 174, cysteine 178, and cysteine 181. Residues 160 to 390 (LDDSPVAPLK…AGIAEEVTAD (231 aa)) form the Radical SAM core domain. The TRAM domain maps to 393-461 (RARLGETVDV…GVDFLAAPVT (69 aa)).

The protein belongs to the methylthiotransferase family. RimO subfamily. Requires [4Fe-4S] cluster as cofactor.

It localises to the cytoplasm. The enzyme catalyses L-aspartate(89)-[ribosomal protein uS12]-hydrogen + (sulfur carrier)-SH + AH2 + 2 S-adenosyl-L-methionine = 3-methylsulfanyl-L-aspartate(89)-[ribosomal protein uS12]-hydrogen + (sulfur carrier)-H + 5'-deoxyadenosine + L-methionine + A + S-adenosyl-L-homocysteine + 2 H(+). Catalyzes the methylthiolation of an aspartic acid residue of ribosomal protein uS12. The protein is Ribosomal protein uS12 methylthiotransferase RimO of Acidothermus cellulolyticus (strain ATCC 43068 / DSM 8971 / 11B).